The chain runs to 564 residues: Urocanate hydratase (564 aa).

Residues 54 to 55, Gln-132, 178 to 180, Glu-198, Arg-203, 244 to 245, 269 to 273, 279 to 280, and Tyr-328 contribute to the NAD(+) site; these read GG, GMG, NA, QTSAH, and YL. Cys-416 is a catalytic residue. Gly-498 lines the NAD(+) pocket.

This sequence belongs to the urocanase family. As to quaternary structure, homodimer. The cofactor is NAD(+).

It catalyses the reaction 4-imidazolone-5-propanoate = trans-urocanate + H2O. It participates in amino-acid degradation; L-histidine degradation into L-glutamate; N-formimidoyl-L-glutamate from L-histidine: step 2/3. The protein is Urocanate hydratase of Trifolium repens (Creeping white clover).